The chain runs to 126 residues: Aspartate 1-decarboxylase (126 aa).

Residue Ser25 is the Schiff-base intermediate with substrate; via pyruvic acid of the active site. Ser25 is subject to Pyruvic acid (Ser). A substrate-binding site is contributed by Thr57. The active-site Proton donor is the Tyr58. 73 to 75 (GAA) is a binding site for substrate.

The protein belongs to the PanD family. Heterooctamer of four alpha and four beta subunits. Requires pyruvate as cofactor. Is synthesized initially as an inactive proenzyme, which is activated by self-cleavage at a specific serine bond to produce a beta-subunit with a hydroxyl group at its C-terminus and an alpha-subunit with a pyruvoyl group at its N-terminus.

Its subcellular location is the cytoplasm. The enzyme catalyses L-aspartate + H(+) = beta-alanine + CO2. It functions in the pathway cofactor biosynthesis; (R)-pantothenate biosynthesis; beta-alanine from L-aspartate: step 1/1. In terms of biological role, catalyzes the pyruvoyl-dependent decarboxylation of aspartate to produce beta-alanine. The sequence is that of Aspartate 1-decarboxylase from Acetivibrio thermocellus (strain ATCC 27405 / DSM 1237 / JCM 9322 / NBRC 103400 / NCIMB 10682 / NRRL B-4536 / VPI 7372) (Clostridium thermocellum).